A 321-amino-acid polypeptide reads, in one-letter code: Transaldolase (321 aa).

The active-site Schiff-base intermediate with substrate is the Lys-132.

It belongs to the transaldolase family. Type 1 subfamily. In terms of assembly, homodimer.

The protein localises to the cytoplasm. It catalyses the reaction D-sedoheptulose 7-phosphate + D-glyceraldehyde 3-phosphate = D-erythrose 4-phosphate + beta-D-fructose 6-phosphate. It functions in the pathway carbohydrate degradation; pentose phosphate pathway; D-glyceraldehyde 3-phosphate and beta-D-fructose 6-phosphate from D-ribose 5-phosphate and D-xylulose 5-phosphate (non-oxidative stage): step 2/3. In terms of biological role, transaldolase is important for the balance of metabolites in the pentose-phosphate pathway. This Rhizobium etli (strain ATCC 51251 / DSM 11541 / JCM 21823 / NBRC 15573 / CFN 42) protein is Transaldolase.